Reading from the N-terminus, the 212-residue chain is Large ribosomal subunit protein uL3 (212 aa).

Gln153 is modified (N5-methylglutamine).

Belongs to the universal ribosomal protein uL3 family. In terms of assembly, part of the 50S ribosomal subunit. Forms a cluster with proteins L14 and L19. In terms of processing, methylated by PrmB.

One of the primary rRNA binding proteins, it binds directly near the 3'-end of the 23S rRNA, where it nucleates assembly of the 50S subunit. This is Large ribosomal subunit protein uL3 from Idiomarina loihiensis (strain ATCC BAA-735 / DSM 15497 / L2-TR).